The sequence spans 404 residues: uncharacterized protein (404 aa).

Residues 262–278 are compositionally biased toward polar residues; the sequence is VSTGDTSPYGTEDSSPA. 2 disordered regions span residues 262–307 and 320–340; these read VSTG…SPSL and KKSH…GGAD. Serine 268, serine 276, and serine 279 each carry phosphoserine. 2 positions are modified to phosphothreonine: threonine 290 and threonine 293. Phosphoserine is present on residues serine 304, serine 306, serine 324, serine 358, and serine 362. Over residues 320–336 the composition is skewed to basic and acidic residues; it reads KKSHSANDSEEFFREDD.

This is an uncharacterized protein from Rattus norvegicus (Rat).